The following is a 70-amino-acid chain: MLNPPLNQLQSKINSKYLIATTAAKRARELDERPETALLSGYHSAKPVGEALEEIASGKITPVVSDEFTM.

This sequence belongs to the RNA polymerase subunit omega family. As to quaternary structure, the RNAP catalytic core consists of 2 alpha, 1 beta, 1 beta' and 1 omega subunit. When a sigma factor is associated with the core the holoenzyme is formed, which can initiate transcription.

The catalysed reaction is RNA(n) + a ribonucleoside 5'-triphosphate = RNA(n+1) + diphosphate. Its function is as follows. Promotes RNA polymerase assembly. Latches the N- and C-terminal regions of the beta' subunit thereby facilitating its interaction with the beta and alpha subunits. The sequence is that of DNA-directed RNA polymerase subunit omega from Staphylococcus haemolyticus (strain JCSC1435).